Reading from the N-terminus, the 237-residue chain is 2-C-methyl-D-erythritol 4-phosphate cytidylyltransferase (237 aa).

The protein belongs to the IspD/TarI cytidylyltransferase family. IspD subfamily. Homodimer.

It carries out the reaction 2-C-methyl-D-erythritol 4-phosphate + CTP + H(+) = 4-CDP-2-C-methyl-D-erythritol + diphosphate. Its pathway is isoprenoid biosynthesis; isopentenyl diphosphate biosynthesis via DXP pathway; isopentenyl diphosphate from 1-deoxy-D-xylulose 5-phosphate: step 2/6. Its function is as follows. Catalyzes the formation of 4-diphosphocytidyl-2-C-methyl-D-erythritol from CTP and 2-C-methyl-D-erythritol 4-phosphate (MEP). The polypeptide is 2-C-methyl-D-erythritol 4-phosphate cytidylyltransferase (Pectobacterium atrosepticum (strain SCRI 1043 / ATCC BAA-672) (Erwinia carotovora subsp. atroseptica)).